The sequence spans 873 residues: DNA mismatch repair protein MutS (873 aa).

628–635 (GPNMAGKS) contributes to the ATP binding site.

The protein belongs to the DNA mismatch repair MutS family.

This protein is involved in the repair of mismatches in DNA. It is possible that it carries out the mismatch recognition step. This protein has a weak ATPase activity. The polypeptide is DNA mismatch repair protein MutS (Chlorobium chlorochromatii (strain CaD3)).